The following is a 457-amino-acid chain: Multidrug resistance protein MdtK (457 aa).

The next 12 membrane-spanning stretches (helical) occupy residues 11-31 (LLALAIPVIFAQIAQTSMGVV), 53-73 (IWLPAILFGHGLLLALTPVIA), 93-113 (VLAGLVSVLIMLVLWNAGYII), 127-147 (AVNYLRALLWGAPGYLFFQVM), 160-180 (GMAMGFIGLLVNIPVNYIFIY), 188-208 (LGGVGCGVATASVYWVMFFCM), 243-263 (MPVALALFFEVTLFAVVALLV), 276-296 (IALNFSSLMFVLPMSMSAAVT), 316-336 (RTGIIVGICLAVLTALFTVVF), 357-377 (LMLLAAIYQISDSIQVIGSGV), 387-407 (IFFITFIAYWVLGLPSGYILG), and 418-438 (PAGFWFGFILGLTSAAIMMMW).

This sequence belongs to the multi antimicrobial extrusion (MATE) (TC 2.A.66.1) family. MdtK subfamily.

Its subcellular location is the cell inner membrane. In terms of biological role, multidrug efflux pump that functions probably as a Na(+)/drug antiporter. This is Multidrug resistance protein MdtK from Cronobacter sakazakii (strain ATCC BAA-894) (Enterobacter sakazakii).